A 636-amino-acid chain; its full sequence is Putative lipase ATG15 (636 aa).

Residues methionine 1 to arginine 19 are Cytoplasmic-facing. The chain crosses the membrane as a helical; Signal-anchor for type II membrane protein span at residues leucine 20–phenylalanine 42. Over serine 43 to methionine 636 the chain is Lumenal. N-linked (GlcNAc...) asparagine glycans are attached at residues asparagine 211, asparagine 233, asparagine 291, asparagine 315, and asparagine 477. The interval glycine 478–serine 500 is disordered. Over residues threonine 479–serine 500 the composition is skewed to low complexity.

Belongs to the AB hydrolase superfamily. Lipase family. In terms of assembly, binds to both phosphatidylinositol (PI) and phosphatidylinositol 3,5-bisphosphate (PIP2).

The protein localises to the endosome. The protein resides in the multivesicular body membrane. It is found in the prevacuolar compartment membrane. The catalysed reaction is a triacylglycerol + H2O = a diacylglycerol + a fatty acid + H(+). Its function is as follows. Lipase which is essential for lysis of subvacuolar cytoplasm to vacuole targeted bodies and intravacuolar autophagic bodies. Involved in the lysis of intravacuolar multivesicular body (MVB) vesicles. The intravacuolar membrane disintegration by ATG15 is critical to life span extension. Autophagy is required for proper vegetative growth, asexual/sexual reproduction, and full virulence. Autophagy is particularly involved in the biosynthesis of deoxynivalenol (DON), an important virulence determinant. The polypeptide is Putative lipase ATG15 (Gibberella zeae (strain ATCC MYA-4620 / CBS 123657 / FGSC 9075 / NRRL 31084 / PH-1) (Wheat head blight fungus)).